We begin with the raw amino-acid sequence, 335 residues long: Glyceraldehyde-3-phosphate dehydrogenase (335 aa).

Residues 12–13 (RI), D34, R78, and S120 each bind NAD(+). D-glyceraldehyde 3-phosphate contacts are provided by residues 151–153 (SCT) and T182. C152 acts as the Nucleophile in catalysis. N183 contributes to the NAD(+) binding site. D-glyceraldehyde 3-phosphate is bound by residues R197, 210 to 211 (TG), and R233. Residue N315 coordinates NAD(+).

The protein belongs to the glyceraldehyde-3-phosphate dehydrogenase family. Homotetramer.

The protein resides in the cytoplasm. It catalyses the reaction D-glyceraldehyde 3-phosphate + phosphate + NAD(+) = (2R)-3-phospho-glyceroyl phosphate + NADH + H(+). It participates in carbohydrate degradation; glycolysis; pyruvate from D-glyceraldehyde 3-phosphate: step 1/5. Its function is as follows. Catalyzes the oxidative phosphorylation of glyceraldehyde 3-phosphate (G3P) to 1,3-bisphosphoglycerate (BPG) using the cofactor NAD. The first reaction step involves the formation of a hemiacetal intermediate between G3P and a cysteine residue, and this hemiacetal intermediate is then oxidized to a thioester, with concomitant reduction of NAD to NADH. The reduced NADH is then exchanged with the second NAD, and the thioester is attacked by a nucleophilic inorganic phosphate to produce BPG. In Priestia megaterium (strain DSM 319 / IMG 1521) (Bacillus megaterium), this protein is Glyceraldehyde-3-phosphate dehydrogenase (gap).